Reading from the N-terminus, the 303-residue chain is MTAVAIPAVRDYLTDLQGRIVAALEQAGGEAFRTDAWQRAEGGGGVSRLLEGGQLFERAGVLFSHVKGTRLPPSASAHRPELAGRGWEAMGVSMVLHPRNPYVPTTHMNVRMFVAAARPGHAESDVFWFGGGLDLTPYYPFEDDARHFHRACRDALDPHGADYYPRYKQWCDEYFFLKHRNETRGIGGIFFDDLNEPGFDASFALTCSVGDSFLPAYLPIVQARRDMPYGERERDFQAYRRGRYVEFNLVFDRGTLFGLQSGGRTESILLSMPPLAQWRYDWQPQAGTPEAALAEFLRPREWV.

S93 serves as a coordination point for substrate. A divalent metal cation-binding residues include H97 and H107. H107 (proton donor) is an active-site residue. 109-111 (NVR) serves as a coordination point for substrate. A divalent metal cation contacts are provided by H149 and H179. The segment at 244 to 279 (YVEFNLVFDRGTLFGLQSGGRTESILLSMPPLAQWR) is important for dimerization. 262 to 264 (GGR) serves as a coordination point for substrate.

This sequence belongs to the aerobic coproporphyrinogen-III oxidase family. In terms of assembly, homodimer. Requires a divalent metal cation as cofactor.

The protein resides in the cytoplasm. It catalyses the reaction coproporphyrinogen III + O2 + 2 H(+) = protoporphyrinogen IX + 2 CO2 + 2 H2O. It participates in porphyrin-containing compound metabolism; protoporphyrin-IX biosynthesis; protoporphyrinogen-IX from coproporphyrinogen-III (O2 route): step 1/1. In terms of biological role, involved in the heme biosynthesis. Catalyzes the aerobic oxidative decarboxylation of propionate groups of rings A and B of coproporphyrinogen-III to yield the vinyl groups in protoporphyrinogen-IX. The chain is Oxygen-dependent coproporphyrinogen-III oxidase from Bordetella pertussis (strain Tohama I / ATCC BAA-589 / NCTC 13251).